Here is a 253-residue protein sequence, read N- to C-terminus: MGKIIAITNQKGGVGKTTTSVNLGACLAYIGKRVLLVDIDPQGNATSGLGIEKADVEQCVYDILVDDADVIDIIKATTVENLDVIPATIQLAGAEIELVPTISREVRLKRALEAVKQNYDYIIIDCPPSLGLLTINALTASDSVVIPVQCEYYALEGLSQLLNTVRLVQKHLNTDLMIEGVLLTMLDARTNLGIQVIEEVKKYFRDKVYKTVIPRNVRLSEAPSHGKPIILYDPRSRGAEVYLDLAKEVAANG.

Residues K11, G12, G13, V14, G15, K16, T17, T18, P214, and N216 each coordinate ATP. T17 serves as a coordination point for Mg(2+).

It belongs to the ParA family. In terms of assembly, dimerizes in the presence of ATP but not ADP; ATP-binding is required for double-stranded (ds)DNA-binding. Interacts with DnaA.

It is found in the cytoplasm. The catalysed reaction is ATP + H2O = ADP + phosphate + H(+). Its function is as follows. Acts as a spatially regulated molecular switch, capable of either inhibiting or activating the ability of DnaA to initiate DNA replication. Monomeric ADP-Soj inhibits oligomerization of DnaA on single-stranded (ss)- or double-stranded (ds)DNA, thus inhibiting DNA replication initiation; does not disassemble premade DnaA-DNA filaments. Decreases the residence time of DnaA on the chromosome at its binding sites (oriC, replication forks and (probably) promoter-binding sites). Soj forms nucleoprotein filaments in an ATP- and DNA-dependent manner. Inhibits the initiation of sporulation, Spo0J antagonizes this inhibition. Soj ultimately inhibits the activation (phosphorylation) of Spo0A. This chain is Sporulation initiation inhibitor protein Soj, found in Bacillus subtilis (strain 168).